The sequence spans 223 residues: Deoxyribose-phosphate aldolase (223 aa).

Asp89 acts as the Proton donor/acceptor in catalysis. Catalysis depends on Lys152, which acts as the Schiff-base intermediate with acetaldehyde. The active-site Proton donor/acceptor is Lys181.

This sequence belongs to the DeoC/FbaB aldolase family. DeoC type 1 subfamily.

It localises to the cytoplasm. It catalyses the reaction 2-deoxy-D-ribose 5-phosphate = D-glyceraldehyde 3-phosphate + acetaldehyde. It functions in the pathway carbohydrate degradation; 2-deoxy-D-ribose 1-phosphate degradation; D-glyceraldehyde 3-phosphate and acetaldehyde from 2-deoxy-alpha-D-ribose 1-phosphate: step 2/2. Its function is as follows. Catalyzes a reversible aldol reaction between acetaldehyde and D-glyceraldehyde 3-phosphate to generate 2-deoxy-D-ribose 5-phosphate. This chain is Deoxyribose-phosphate aldolase, found in Bacillus cytotoxicus (strain DSM 22905 / CIP 110041 / 391-98 / NVH 391-98).